Consider the following 547-residue polypeptide: CTP synthase (547 aa).

The segment at 1–265 (MARFVFITGG…DQAVLDAFSI (265 aa)) is amidoligase domain. Residue serine 13 participates in CTP binding. Serine 13 provides a ligand contact to UTP. ATP-binding positions include 14–19 (SLGKGL) and aspartate 71. Residues aspartate 71 and glutamate 139 each contribute to the Mg(2+) site. CTP contacts are provided by residues 146–148 (DIE), 186–191 (KTKPTQ), and lysine 222. UTP-binding positions include 186–191 (KTKPTQ) and lysine 222. Residues 291–546 (NVAIVGKYTQ…VRAAKEVSRL (256 aa)) enclose the Glutamine amidotransferase type-1 domain. Glycine 353 contributes to the L-glutamine binding site. Cysteine 380 functions as the Nucleophile; for glutamine hydrolysis in the catalytic mechanism. Residues 381–384 (LGMQ), glutamate 404, and arginine 474 contribute to the L-glutamine site. Active-site residues include histidine 519 and glutamate 521.

The protein belongs to the CTP synthase family. As to quaternary structure, homotetramer.

The catalysed reaction is UTP + L-glutamine + ATP + H2O = CTP + L-glutamate + ADP + phosphate + 2 H(+). It catalyses the reaction L-glutamine + H2O = L-glutamate + NH4(+). The enzyme catalyses UTP + NH4(+) + ATP = CTP + ADP + phosphate + 2 H(+). It participates in pyrimidine metabolism; CTP biosynthesis via de novo pathway; CTP from UDP: step 2/2. Its activity is regulated as follows. Allosterically activated by GTP, when glutamine is the substrate; GTP has no effect on the reaction when ammonia is the substrate. The allosteric effector GTP functions by stabilizing the protein conformation that binds the tetrahedral intermediate(s) formed during glutamine hydrolysis. Inhibited by the product CTP, via allosteric rather than competitive inhibition. Its function is as follows. Catalyzes the ATP-dependent amination of UTP to CTP with either L-glutamine or ammonia as the source of nitrogen. Regulates intracellular CTP levels through interactions with the four ribonucleotide triphosphates. The protein is CTP synthase of Dinoroseobacter shibae (strain DSM 16493 / NCIMB 14021 / DFL 12).